We begin with the raw amino-acid sequence, 319 residues long: MDQNNSLPPYAQGLASPQGAMTPGIPIFSPMMPYGTGLTPQPIQNTNSLSILEEQQRQQQQQQQQQQQQQQQQQQQAAVAAVQQSTSQQATQGPSGQTPQLFHSQTLTTAPLPGTTPLYPSPMTPMTPITPATPASESSGIVPQLQNIVSTVNLGCKLDLKTIALRARNAEYNPKRFAAVIMRIREPRTTALIFSSGKMVCTGAKSEEQSRLAARKYARVVQKLGFPAKFLDFKIQNMVGSCDVKFPIRLEGLVLTHQQFSSYEPELFPGLIYRMIKPRIVLLIFVSGKVVLTGAKVRAEIYEAFENIYPILKGFRKTT.

Disordered regions lie at residues 1 to 21 (MDQN…QGAM) and 107 to 139 (LTTA…SESS). Low complexity-rich tracts occupy residues 107-118 (LTTAPLPGTTPL) and 126-136 (MTPITPATPAS). Repeat copies occupy residues 145-221 (LQNI…ARVV) and 235-312 (IQNM…YPIL). DNA is bound by residues Asn147, Arg183, Lys198, Asn237, and Arg274.

This sequence belongs to the TBP family. In terms of assembly, binds DNA as monomer. Belongs to the TFIID complex together with the TBP-associated factors (TAFs). Part of a TFIID-containing RNA polymerase II pre-initiation complex that is composed of TBP and at least GTF2A1, GTF2A2, GTF2E1, GTF2E2, GTF2F1, GTF2H2, GTF2H3, GTF2H4, GTF2H5, GTF2B, TCEA1, ERCC2, ERCC3, TAF1, TAF2, TAF3, TAF4, TAF5, TAF6, TAF7, TAF8, TAF9, TAF10, TAF11, TAF12 and TAF13. Component of the transcription factor SL1/TIF-IB complex, composed of TBP and at least TAF1A, TAF1B, TAF1C and TAF1D. Association of TBP to form either TFIID or SL1/TIF-IB appears to be mutually exclusive. Interacts with TAF1A, TAF1B and TAF1C. Interacts with TFIIB, NCOA6, DRAP1, DR1 and ELF3. Interacts with SPIB, SNAPC1, SNAPC2 and SNAPC4. Interacts with UTF1. Interacts with BRF2; this interaction promotes recruitment of BRF2 to TATA box-containing promoters. Interacts with UBTF. Interacts with GPBP1. Interacts with CITED2. Interacts with ATF7IP. Interacts with LLPH. Interacts with GTF2B (via C-terminus); this interaction with promoter-bound TBP guides RNA polymerase II into the pre-initiation complex (PIC). Interacts with PAX5. Interacts with MSX1; the interaction may inhibit MSX1 autoinactivation. Interacts with MSX3.

The protein localises to the nucleus. General transcription factor that functions at the core of the DNA-binding multiprotein factor TFIID. Binding of TFIID to the TATA box is the initial transcriptional step of the pre-initiation complex (PIC), playing a role in the activation of eukaryotic genes transcribed by RNA polymerase II. Component of a BRF2-containing transcription factor complex that regulates transcription mediated by RNA polymerase III. Component of the transcription factor SL1/TIF-IB complex, which is involved in the assembly of the PIC (pre-initiation complex) during RNA polymerase I-dependent transcription. The rate of PIC formation probably is primarily dependent on the rate of association of SL1 with the rDNA promoter. SL1 is involved in stabilization of nucleolar transcription factor 1/UBTF on rDNA. This Bos taurus (Bovine) protein is TATA-box-binding protein (TBP).